A 137-amino-acid polypeptide reads, in one-letter code: MQIADQSKRVVYLGTGRRKSAVARVRLIPGSGQLWINGRNGADYLQNNPIYLNLVKAPLETLGLENSYDIYVNATGGGLTGQADAIRLGIARALCQLDIENRKPLKTEGYLTRDPRAKERRKYGLRKARKAPQYSKR.

Positions 106–117 are enriched in basic and acidic residues; the sequence is KTEGYLTRDPRA. Positions 106–137 are disordered; that stretch reads KTEGYLTRDPRAKERRKYGLRKARKAPQYSKR. Basic residues predominate over residues 118-137; it reads KERRKYGLRKARKAPQYSKR.

Belongs to the universal ribosomal protein uS9 family.

This Thermosynechococcus vestitus (strain NIES-2133 / IAM M-273 / BP-1) protein is Small ribosomal subunit protein uS9.